The sequence spans 227 residues: Cytochrome c oxidase subunit 2 (227 aa).

Residues Met-1–Ser-14 lie on the Mitochondrial intermembrane side of the membrane. The chain crosses the membrane as a helical span at residues Pro-15 to Met-45. Over Leu-46–Gln-59 the chain is Mitochondrial matrix. A helical transmembrane segment spans residues Glu-60–Met-87. Residues Asp-88–Thr-227 lie on the Mitochondrial intermembrane side of the membrane. Cu cation contacts are provided by His-161, Cys-196, Glu-198, Cys-200, His-204, and Met-207. Mg(2+) is bound at residue Glu-198. The residue at position 218 (Tyr-218) is a Phosphotyrosine.

This sequence belongs to the cytochrome c oxidase subunit 2 family. As to quaternary structure, component of the cytochrome c oxidase (complex IV, CIV), a multisubunit enzyme composed of 14 subunits. The complex is composed of a catalytic core of 3 subunits MT-CO1, MT-CO2 and MT-CO3, encoded in the mitochondrial DNA, and 11 supernumerary subunits COX4I, COX5A, COX5B, COX6A, COX6B, COX6C, COX7A, COX7B, COX7C, COX8 and NDUFA4, which are encoded in the nuclear genome. The complex exists as a monomer or a dimer and forms supercomplexes (SCs) in the inner mitochondrial membrane with NADH-ubiquinone oxidoreductase (complex I, CI) and ubiquinol-cytochrome c oxidoreductase (cytochrome b-c1 complex, complex III, CIII), resulting in different assemblies (supercomplex SCI(1)III(2)IV(1) and megacomplex MCI(2)III(2)IV(2)). Found in a complex with TMEM177, COA6, COX18, COX20, SCO1 and SCO2. Interacts with TMEM177 in a COX20-dependent manner. Interacts with COX20. Interacts with COX16. It depends on Cu cation as a cofactor.

The protein resides in the mitochondrion inner membrane. The enzyme catalyses 4 Fe(II)-[cytochrome c] + O2 + 8 H(+)(in) = 4 Fe(III)-[cytochrome c] + 2 H2O + 4 H(+)(out). Its function is as follows. Component of the cytochrome c oxidase, the last enzyme in the mitochondrial electron transport chain which drives oxidative phosphorylation. The respiratory chain contains 3 multisubunit complexes succinate dehydrogenase (complex II, CII), ubiquinol-cytochrome c oxidoreductase (cytochrome b-c1 complex, complex III, CIII) and cytochrome c oxidase (complex IV, CIV), that cooperate to transfer electrons derived from NADH and succinate to molecular oxygen, creating an electrochemical gradient over the inner membrane that drives transmembrane transport and the ATP synthase. Cytochrome c oxidase is the component of the respiratory chain that catalyzes the reduction of oxygen to water. Electrons originating from reduced cytochrome c in the intermembrane space (IMS) are transferred via the dinuclear copper A center (CU(A)) of subunit 2 and heme A of subunit 1 to the active site in subunit 1, a binuclear center (BNC) formed by heme A3 and copper B (CU(B)). The BNC reduces molecular oxygen to 2 water molecules using 4 electrons from cytochrome c in the IMS and 4 protons from the mitochondrial matrix. In Carlito syrichta (Philippine tarsier), this protein is Cytochrome c oxidase subunit 2 (MT-CO2).